The following is a 428-amino-acid chain: Glutamine synthetase, chloroplastic (428 aa).

A chloroplast-targeting transit peptide spans Met1 to Ala48. The GS beta-grasp domain occupies Ile75 to Gly155. Positions Thr95–Pro120 are disordered. A GS catalytic domain is found at Pro159–Val428.

This sequence belongs to the glutamine synthetase family. In terms of assembly, homooctamer.

It is found in the plastid. The protein localises to the chloroplast. It catalyses the reaction L-glutamate + NH4(+) + ATP = L-glutamine + ADP + phosphate + H(+). In terms of biological role, light-modulated chloroplastic glutamine synthetase, encoded by a nuclear gene and expressed primarily in leaves, and which is responsible for the reassimilation of the ammonia generated by photorespiration. This is Glutamine synthetase, chloroplastic from Oryza sativa subsp. japonica (Rice).